A 732-amino-acid chain; its full sequence is Small conductance calcium-activated potassium channel protein 3 (732 aa).

Positions 1–11 (MDTSGHFHDSG) are enriched in basic and acidic residues. 2 disordered regions span residues 1–82 (MDTS…QQAP) and 119–161 (AILH…QASP). Over residues 35–61 (QPPPPPAPPAVPQQPPGPLLQPQPPQP) the composition is skewed to pro residues. Low complexity predominate over residues 62–82 (QQQQSQQQQQQQSQQQQQQAP). A compositionally biased stretch (polar residues) spans 119 to 133 (AILHPSSRQGSQLNL). Low complexity predominate over residues 139 to 148 (GHSPSSTATS). Ser168 is subject to Phosphoserine. Over residues 241–257 (THNHQHAGTTAGSTTFP) the composition is skewed to polar residues. The tract at residues 241-260 (THNHQHAGTTAGSTTFPKAN) is disordered. Residues 289–309 (LIFGMFGIVVMVIETELSWGL) form a helical membrane-spanning segment. The helical transmembrane segment at 316–336 (FSLALKCLISLSTVILLGLII) threads the bilayer. Residues 367 to 387 (ISLEMLVCAIHPIPGEYKFFW) traverse the membrane as a helical segment. The chain crosses the membrane as a helical span at residues 406-426 (IILSIPMFLRLYLIARVMLLH). Residues 455–475 (LMTICPGTVLLVFSISLWIIA) form a helical membrane-spanning segment. Positions 495-515 (FLGAMWLISITFLSIGYGDMV) form an intramembrane region, pore-forming. Residues 524 to 544 (VCLLTGIMGAGCTALVVAVVA) traverse the membrane as a helical segment. Residues 562-638 (DTQLTKRIKN…LVDLSKMQNV (77 aa)) are calmodulin-binding. Residues 643–670 (ITELNDRSEDLEKQIGSLESKLEHLTAS) adopt a coiled-coil conformation. The interval 704 to 732 (GTSHAPPSDSPIGISSTSFPTPYTSSSSC) is disordered. A compositionally biased stretch (low complexity) spans 718 to 732 (SSTSFPTPYTSSSSC).

It belongs to the potassium channel KCNN family. KCa2.3/KCNN3 subfamily. In terms of assembly, homodimer. Heteromultimer with KCNN2 or KCNN1; this modulates plasma membrane expression and consequently the small conductance calcium-activated potassium channel activity. The complex is composed of 4 channel subunits each of which binds to a calmodulin subunit which regulates the channel activity through calcium-binding. Interacts with CALM1. Expressed at low levels in atrial and ventricular myocytes (at protein level).

It is found in the cell membrane. The protein localises to the cytoplasm. The protein resides in the myofibril. It localises to the sarcomere. Its subcellular location is the z line. It carries out the reaction K(+)(in) = K(+)(out). Inhibited by bee venom neurotoxin apamin. Its function is as follows. Small conductance calcium-activated potassium channel that mediates the voltage-independent transmembrane transfer of potassium across the cell membrane through a constitutive interaction with calmodulin which binds the intracellular calcium allowing its opening. The current is characterized by a voltage-independent activation, an intracellular calcium concentration increase-dependent activation and a single-channel conductance of 10 picosiemens. Also presents an inwardly rectifying current, thus reducing its already small outward conductance of potassium ions, which is particularly the case when the membrane potential displays positive values, above + 20 mV. Activation is followed by membrane hyperpolarization. Thought to regulate neuronal excitability by contributing to the slow component of synaptic afterhyperpolarization. The sequence is that of Small conductance calcium-activated potassium channel protein 3 from Mus musculus (Mouse).